Consider the following 1376-residue polypeptide: MSEVQGTIEFSIELHKFHNVDLFQRGYYHVRASLKASSRIPHRLVATLVGQTDDPGPYPPCVYDNVVYSRMFQILYRNEDIDINDVMAFKVHLLLDGERVEDALSEVDFQLKLDLHFTDSEQQLKDMSAVPLISSRTLGLYFHPTSGLHHHVPVMFDYFHLSVISVTVHGSLIALHQPLISFARPVKASWLGKSGQELVTDNTSISMENLVFGSAYCKPPSSEGSYVPSEDCIQHAYKWHKDLCQLLLSAYSALGLCHANVLKEIPDLPHSEIEELPTERTLSQLCNQLQLLSDPEEITEQISKDLAWLRSQLLITWSHFLETVTLQPDVTSYLMQEHHTLRVRRFSEAFFYTEHEKPAVLTFQENLIQSQSNLSTEIRNSEYLAALPPLPIECLDIDGDWNSIPIIFEDRYVECPRKDYITDNALAEPANEDECEFSEESPSENTHVGSKPHSIQSTTVHENASFEKPNVGTKAQEDCSTEGPEQGFDHNQEATSVESEFVADFTPLPIPPSETSDSGAKLSLSALNEDCDQVTRCYQEPKRTPGVTYIKVKPQSQDQYKGETVLIVSSQYGNSLSLANSEAPQSESETMNSNNGMRTYEHIALHEISSTKNELISTLKSQKSRQCSHILLKSSSTELIRNSTEDTLMVKSCPRDIYEKSSLFASGCIKRSSSVISDSGIESEPSSVAWCDVHNRRMDLNSDKDLLLQLSKQHWAYGNSLEGDHMESNTSLPSGIQASLASINSLPFEEEDREMELSKLTKSVSAPQISSPEETLNDLLNNKLVGEIIHSLKKCSSEEKEEESQTAMNYYNNITNDIISELANDTHNTNGTKSPESSLANVFIQGLIPNSESGVIDDYIFNDPVVPKADDFPSVHQETILCDLNSTDDQNILDHSNKMEHVAKACSFSADPLVDVNSITHTSFSVIAPAKEIFEDFPVLHEIELSEDSVESIDQSIDNYYHELYSIEKEVSNNRTDGASELEETSASLSTVRVLERRKGVELVNLSVSCTATCLPFSSMQKDTPVIPGFSTKQALFPITRQPLGSFEVNSSNSNTDEESNERMLSFHQAKDKFRKELKFEGFLYSDQPVLASDVPYFPPEEEQTEDGIHLVVCVHGLDGNSADLRLVKTFLELGLPGANLDFLMSEKNQTDTFADFDAMTDRLIDEIVQHIQLYNLSISRISFIGHSLGTIIIRSVLTRPRFRYYLNKLHTFLSLSGPHLGTLYSNSTLVNTGLWLMQKLKKSGSLLQLTFRDNADLRKCFLYQLSQKPGLQYFKNVVLVASPQDRYVPFHSARIEMCKNATKDRHTGPVYTEMINNLLQPVIDSKDCTLIRHNVSHALPNTANTLIGRAAHIAVLDSELFLEKFFLVAGLGYFK.

Residues 431 to 442 (NEDECEFSEESP) show a composition bias toward acidic residues. Residues 431–489 (NEDECEFSEESPSENTHVGSKPHSIQSTTVHENASFEKPNVGTKAQEDCSTEGPEQGFD) are disordered. Positions 443–462 (SENTHVGSKPHSIQSTTVHE) are enriched in polar residues.

The protein belongs to the FAM135 family.

This chain is Protein FAM135B (fam135b), found in Xenopus laevis (African clawed frog).